Here is a 341-residue protein sequence, read N- to C-terminus: GTP-binding protein GTR2 (341 aa).

Residues S23, S24, S43, H124, and D127 each coordinate GTP.

Belongs to the GTR/RAG GTP-binding protein family. In terms of assembly, heterodimer; with GTR1. Component of the GSE complex composed of GTR1, GTR2, SLM4, MEH1 and LTV1. Component of the EGO complex, at least composed of GTR2, SLM4 and MEH1. Interacts with GTR1; the interaction is direct.

The protein localises to the vacuole membrane. It catalyses the reaction GTP + H2O = GDP + phosphate + H(+). GTPase involved in activation of the TORC1 signaling pathway, which promotes growth and represses autophagy in nutrient-rich conditions. Also required for TORC1 inactivation during nitrogen starvation. Required for intracellular sorting of GAP1 out of the endosome. Involved in the regulation of microautophagy. The chain is GTP-binding protein GTR2 from Saccharomyces cerevisiae (strain ATCC 204508 / S288c) (Baker's yeast).